We begin with the raw amino-acid sequence, 242 residues long: Biosynthetic peptidoglycan transglycosylase (242 aa).

The helical transmembrane segment at 19 to 39 threads the bilayer; the sequence is ILAALAVFWGGGIALFSVVPV.

The protein belongs to the glycosyltransferase 51 family.

It localises to the cell inner membrane. It carries out the reaction [GlcNAc-(1-&gt;4)-Mur2Ac(oyl-L-Ala-gamma-D-Glu-L-Lys-D-Ala-D-Ala)](n)-di-trans,octa-cis-undecaprenyl diphosphate + beta-D-GlcNAc-(1-&gt;4)-Mur2Ac(oyl-L-Ala-gamma-D-Glu-L-Lys-D-Ala-D-Ala)-di-trans,octa-cis-undecaprenyl diphosphate = [GlcNAc-(1-&gt;4)-Mur2Ac(oyl-L-Ala-gamma-D-Glu-L-Lys-D-Ala-D-Ala)](n+1)-di-trans,octa-cis-undecaprenyl diphosphate + di-trans,octa-cis-undecaprenyl diphosphate + H(+). It participates in cell wall biogenesis; peptidoglycan biosynthesis. Its function is as follows. Peptidoglycan polymerase that catalyzes glycan chain elongation from lipid-linked precursors. In Salmonella typhi, this protein is Biosynthetic peptidoglycan transglycosylase.